The following is a 475-amino-acid chain: Bifunctional protein HldE (475 aa).

The tract at residues 1 to 318 (MKVTLPDFER…ENAVRGRAET (318 aa)) is ribokinase. 195-198 (NLSE) contributes to the ATP binding site. Residue Asp264 is part of the active site. Residues 344–475 (MTNGVFDILH…NIIKKIQKNS (132 aa)) are cytidylyltransferase.

In the N-terminal section; belongs to the carbohydrate kinase PfkB family. The protein in the C-terminal section; belongs to the cytidylyltransferase family. In terms of assembly, homodimer.

It carries out the reaction D-glycero-beta-D-manno-heptose 7-phosphate + ATP = D-glycero-beta-D-manno-heptose 1,7-bisphosphate + ADP + H(+). It catalyses the reaction D-glycero-beta-D-manno-heptose 1-phosphate + ATP + H(+) = ADP-D-glycero-beta-D-manno-heptose + diphosphate. It participates in nucleotide-sugar biosynthesis; ADP-L-glycero-beta-D-manno-heptose biosynthesis; ADP-L-glycero-beta-D-manno-heptose from D-glycero-beta-D-manno-heptose 7-phosphate: step 1/4. Its pathway is nucleotide-sugar biosynthesis; ADP-L-glycero-beta-D-manno-heptose biosynthesis; ADP-L-glycero-beta-D-manno-heptose from D-glycero-beta-D-manno-heptose 7-phosphate: step 3/4. Its function is as follows. Catalyzes the phosphorylation of D-glycero-D-manno-heptose 7-phosphate at the C-1 position to selectively form D-glycero-beta-D-manno-heptose-1,7-bisphosphate. In terms of biological role, catalyzes the ADP transfer from ATP to D-glycero-beta-D-manno-heptose 1-phosphate, yielding ADP-D-glycero-beta-D-manno-heptose. This chain is Bifunctional protein HldE, found in Cronobacter sakazakii (strain ATCC BAA-894) (Enterobacter sakazakii).